Consider the following 428-residue polypeptide: D-amino acid dehydrogenase (428 aa).

3-17 (VVILGSGVVGVASAY) lines the FAD pocket.

It belongs to the DadA oxidoreductase family. Requires FAD as cofactor.

It catalyses the reaction a D-alpha-amino acid + A + H2O = a 2-oxocarboxylate + AH2 + NH4(+). The protein operates within amino-acid degradation; D-alanine degradation; NH(3) and pyruvate from D-alanine: step 1/1. In terms of biological role, oxidative deamination of D-amino acids. In Burkholderia vietnamiensis (strain G4 / LMG 22486) (Burkholderia cepacia (strain R1808)), this protein is D-amino acid dehydrogenase.